We begin with the raw amino-acid sequence, 359 residues long: Fructose-bisphosphate aldolase class 2 (359 aa).

Residue S62 coordinates D-glyceraldehyde 3-phosphate. D110 (proton donor) is an active-site residue. Positions 111, 145, 175, and 227 each coordinate Zn(2+). G228 provides a ligand contact to dihydroxyacetone phosphate. A Zn(2+)-binding site is contributed by H265. Dihydroxyacetone phosphate-binding positions include 266-268 (GGS) and 287-290 (NIDT).

Belongs to the class II fructose-bisphosphate aldolase family. Zn(2+) is required as a cofactor.

It carries out the reaction beta-D-fructose 1,6-bisphosphate = D-glyceraldehyde 3-phosphate + dihydroxyacetone phosphate. It participates in carbohydrate degradation; glycolysis; D-glyceraldehyde 3-phosphate and glycerone phosphate from D-glucose: step 4/4. Functionally, catalyzes the aldol condensation of dihydroxyacetone phosphate (DHAP or glycerone-phosphate) with glyceraldehyde 3-phosphate (G3P) to form fructose 1,6-bisphosphate (FBP) in gluconeogenesis and the reverse reaction in glycolysis. This Buchnera aphidicola subsp. Baizongia pistaciae (strain Bp) protein is Fructose-bisphosphate aldolase class 2 (fbaA).